The primary structure comprises 119 residues: Ribonuclease P protein component (119 aa).

The protein belongs to the RnpA family. In terms of assembly, consists of a catalytic RNA component (M1 or rnpB) and a protein subunit.

The enzyme catalyses Endonucleolytic cleavage of RNA, removing 5'-extranucleotides from tRNA precursor.. RNaseP catalyzes the removal of the 5'-leader sequence from pre-tRNA to produce the mature 5'-terminus. It can also cleave other RNA substrates such as 4.5S RNA. The protein component plays an auxiliary but essential role in vivo by binding to the 5'-leader sequence and broadening the substrate specificity of the ribozyme. The chain is Ribonuclease P protein component from Proteus mirabilis (strain HI4320).